Reading from the N-terminus, the 141-residue chain is Galactose-6-phosphate isomerase subunit LacA 1 (141 aa).

It belongs to the LacAB/RpiB family. In terms of assembly, heteromultimeric protein consisting of LacA and LacB.

It carries out the reaction aldehydo-D-galactose 6-phosphate = keto-D-tagatose 6-phosphate. It functions in the pathway carbohydrate metabolism; D-galactose 6-phosphate degradation; D-tagatose 6-phosphate from D-galactose 6-phosphate: step 1/1. This Streptococcus pyogenes serotype M3 (strain SSI-1) protein is Galactose-6-phosphate isomerase subunit LacA 1.